We begin with the raw amino-acid sequence, 159 residues long: Pathogenesis-related leaf protein 4 (159 aa).

A signal peptide spans Met1–Ala24. Gln25 carries the post-translational modification Pyrrolidone carboxylic acid. The SCP domain occupies Leu32–Tyr147. Intrachain disulfides connect Cys68–Cys136, Cys109–Cys115, and Cys131–Cys145.

This sequence belongs to the CRISP family.

Functionally, probably involved in the defense reaction of plants against pathogens. This is Pathogenesis-related leaf protein 4 from Solanum lycopersicum (Tomato).